We begin with the raw amino-acid sequence, 860 residues long: MATDLGELLVPYMPTIRVPRTGDRVFKSECAFSYDSPESEGGLYVCMNSFLGFGREHVERHYRKTGQSVYMHLKRHVKEKATGAAGGAIPRRRNGKVFLDLELNRDFNGDDYEYEDEAKLVIFPDHYEIPLPNIEELPALVTIACDAVLNAPSPYKKQESDSWEEEIQVSRHARSLRQLDNGVRIPPSGWKCAKCEMRENLWLNLTDGSVLCGKWFFDGSGGNGHALEHYRESNFPLAVKLNTITPDGADIYSFDEEEAVLDPHISEHLLHFGIDMLQMQRTENGHHTDNHVQPRISDWEVIQEAGLKLKPVYGSGYTGIKNLGNSCYLSTTMQVLFSIPEFQRAYAGNLQRIFDYSPLDPTQDFNTQMAKLGHGLLSGQYSKPPMKSELIEQVMKEEHKQQQQRGISPKMFKALVSKGHPEFSSNRQQDAHEFLLHLINLVERNNSGSENPSDVFRFIVEERTQCCQSQKVRYTQRVDYLMQLPVPLEAASNREELIAYEGKRKEAEENMRPLPEVVRARVPFTACLQAFTEPENVPDFWSSALQAKSAGVKTSRFATFPEYMIVQLKKFTFGVDWVPKKLDMSVDVPDFLDLNRLRATGLQAGEEELPDLTPPIVIPEDTRDSSTNNSLESPEIDESSVMQLAEMGFPLEACRKAVYYTGNMGAEMAFNWIIAHMEEPDFAEPLAVPTYMESDLPSPSLPTTSALDNQPPEESISILTSMGFPRHHTIQALKASNNNLERALDWIFTHPDCEDESEAMSDTADTEPNDNSFSNANAHTDSSLSPDQDLSSPRVRDGPGRYELFAFISHMGTSTMSGHYVCHIKKEGRWLIYNDHKVCLSERPPKDLGYMYFYRRLSSC.

The segment at 168–276 (QVSRHARSLR…EHLLHFGIDM (109 aa)) adopts a UBP-type; degenerate zinc-finger fold. The Zn(2+) site is built by Cys192, Cys195, Cys212, and His225. A USP domain is found at 318 to 857 (TGIKNLGNSC…LGYMYFYRRL (540 aa)). The active-site Nucleophile is Cys327. Residues 611–636 (DLTPPIVIPEDTRDSSTNNSLESPEI) form a disordered region. 2 UBA domains span residues 635–676 (EIDE…IIAH) and 710–750 (QPPE…IFTH). Residues 755–768 (DESEAMSDTADTEP) show a composition bias toward acidic residues. A disordered region spans residues 755–795 (DESEAMSDTADTEPNDNSFSNANAHTDSSLSPDQDLSSPRV). The span at 769–780 (NDNSFSNANAHT) shows a compositional bias: polar residues. A compositionally biased stretch (low complexity) spans 781-793 (DSSLSPDQDLSSP). His819 functions as the Proton acceptor in the catalytic mechanism.

Belongs to the peptidase C19 family.

The catalysed reaction is Thiol-dependent hydrolysis of ester, thioester, amide, peptide and isopeptide bonds formed by the C-terminal Gly of ubiquitin (a 76-residue protein attached to proteins as an intracellular targeting signal).. With respect to regulation, specifically inhibited by spautin-1 (specific and potent autophagy inhibitor-1), a derivative of MBCQ that binds to usp13 and inhibits deubiquitinase activity. Functionally, deubiquitinase that mediates deubiquitination of target proteins and is involved in various processes such as autophagy and endoplasmic reticulum-associated degradation (ERAD). The chain is Ubiquitin carboxyl-terminal hydrolase 13 (usp13) from Danio rerio (Zebrafish).